The chain runs to 164 residues: DNA-binding protein inhibitor ID-1 (164 aa).

Residues 46–98 (LPALLDEQQVNVLLYDMNGCYSRLKELVPTLPQNRKVSKVEILQHVIDYIRDL) form the bHLH domain. The Nuclear export signal signature appears at 91-104 (VIDYIRDLQLELNS).

As to quaternary structure, heterodimer with other HLH proteins. Interacts with COPS5, IFI204, GATA4, NKX2-5, CLOCK and BMAL1. Isoform Short can form homodimers. Post-translationally, phosphorylated in vitro by PKA and PKC.

The protein resides in the cytoplasm. Its subcellular location is the nucleus. In terms of biological role, transcriptional regulator (lacking a basic DNA binding domain) which negatively regulates the basic helix-loop-helix (bHLH) transcription factors by forming heterodimers and inhibiting their DNA binding and transcriptional activity. Implicated in regulating a variety of cellular processes, including cellular growth, senescence, differentiation, apoptosis, angiogenesis, and neoplastic transformation. Inhibits skeletal muscle and cardiac myocyte differentiation. Regulates the circadian clock by repressing the transcriptional activator activity of the CLOCK-BMAL1 heterodimer. The polypeptide is DNA-binding protein inhibitor ID-1 (Id1) (Rattus norvegicus (Rat)).